The chain runs to 536 residues: Chaperonin GroEL 2 (536 aa).

ATP-binding positions include 29-32, 86-90, Gly413, 476-478, and Asp492; these read TLGP, DGTTT, and NAA.

The protein belongs to the chaperonin (HSP60) family. Forms a cylinder of 14 subunits composed of two heptameric rings stacked back-to-back. Interacts with the co-chaperonin GroES.

Its subcellular location is the cytoplasm. The catalysed reaction is ATP + H2O + a folded polypeptide = ADP + phosphate + an unfolded polypeptide.. Together with its co-chaperonin GroES, plays an essential role in assisting protein folding. The GroEL-GroES system forms a nano-cage that allows encapsulation of the non-native substrate proteins and provides a physical environment optimized to promote and accelerate protein folding. This Moorella thermoacetica (strain ATCC 39073 / JCM 9320) protein is Chaperonin GroEL 2.